The following is a 445-amino-acid chain: Argininosuccinate synthase (445 aa).

Residues 17-25 and Ala43 contribute to the ATP site; that span reads AFSGGLDTS. Residue Tyr99 participates in L-citrulline binding. The ATP site is built by Gly129 and Thr131. 3 residues coordinate L-aspartate: Thr131, Asn135, and Asp136. Asn135 lines the L-citrulline pocket. Asp136 is a binding site for ATP. L-citrulline-binding residues include Arg139 and Ser192. Asp194 provides a ligand contact to ATP. L-citrulline-binding residues include Thr201, Glu203, and Glu280.

The protein belongs to the argininosuccinate synthase family. Type 2 subfamily. In terms of assembly, homotetramer.

It localises to the cytoplasm. The enzyme catalyses L-citrulline + L-aspartate + ATP = 2-(N(omega)-L-arginino)succinate + AMP + diphosphate + H(+). It functions in the pathway amino-acid biosynthesis; L-arginine biosynthesis; L-arginine from L-ornithine and carbamoyl phosphate: step 2/3. The sequence is that of Argininosuccinate synthase from Rhodopseudomonas palustris (strain ATCC BAA-98 / CGA009).